The following is a 247-amino-acid chain: PF03932 family protein CutC (247 aa).

Belongs to the CutC family.

The protein localises to the cytoplasm. The protein is PF03932 family protein CutC of Vibrio campbellii (strain ATCC BAA-1116).